The chain runs to 901 residues: Core protein VP3 (901 aa).

It belongs to the orbivirus VP3 family.

The protein resides in the virion. Its function is as follows. The VP3 protein is one of the five proteins (with VP1, VP4, VP6 and VP7) which form the inner capsid of the virus. The chain is Core protein VP3 (Segment-3) from Antilocapra americana (Pronghorn).